The sequence spans 344 residues: Type II methyltransferase M.FnuDI (344 aa).

The region spanning 1–330 (MKLLSLFSGA…KRIKETLTDK (330 aa)) is the SAM-dependent MTase C5-type domain. Cys71 is an active-site residue.

Belongs to the class I-like SAM-binding methyltransferase superfamily. C5-methyltransferase family.

It carries out the reaction a 2'-deoxycytidine in DNA + S-adenosyl-L-methionine = a 5-methyl-2'-deoxycytidine in DNA + S-adenosyl-L-homocysteine + H(+). Functionally, a methylase, recognizes the double-stranded sequence 5'-GGCC-3', methylates C-? on both strands, and protects the DNA from cleavage by the FnuDI endonuclease. This Fusobacterium nucleatum protein is Type II methyltransferase M.FnuDI (fnuDIM).